Consider the following 200-residue polypeptide: UPF0301 protein BruAb1_0502 (200 aa).

It belongs to the UPF0301 (AlgH) family.

This is UPF0301 protein BruAb1_0502 from Brucella abortus biovar 1 (strain 9-941).